The sequence spans 148 residues: Large ribosomal subunit protein bL9 (148 aa).

Part of the 50S ribosomal subunit.

Functionally, binds to the 23S rRNA. Extends more that 50 Angstroms beyond the surface of the 70S ribosome. This Thermus thermophilus (strain ATCC 27634 / DSM 579 / HB8) protein is Large ribosomal subunit protein bL9 (rplI).